The primary structure comprises 473 residues: GTPase Der (473 aa).

EngA-type G domains lie at 5-170 (PVVA…PEDV) and 178-351 (LKLA…ASSM). GTP contacts are provided by residues 11–18 (GRPNVGKS), 58–62 (DTGGI), 123–126 (NKID), 184–191 (GRPNVGKS), 231–235 (DTAGV), and 296–299 (NKWD). A KH-like domain is found at 352–436 (FKVSTNRLTQ…PLKVEFKLNT (85 aa)). A disordered region spans residues 438 to 473 (PYAGKKTTSSKKLRPGVSEARQKRRNMKYKKGSHKK). A compositionally biased stretch (basic residues) spans 459 to 473 (QKRRNMKYKKGSHKK).

This sequence belongs to the TRAFAC class TrmE-Era-EngA-EngB-Septin-like GTPase superfamily. EngA (Der) GTPase family. As to quaternary structure, associates with the 50S ribosomal subunit.

GTPase that plays an essential role in the late steps of ribosome biogenesis. The sequence is that of GTPase Der from Psychrobacter sp. (strain PRwf-1).